The chain runs to 375 residues: Peptidyl-prolyl cis-trans isomerase D (375 aa).

The PPIase cyclophilin-type domain maps to Tyr-7 to Val-169. TPR repeat units follow at residues Ala-217 to His-250, Leu-270 to Ser-307, and Gly-312 to Asp-345.

The protein belongs to the cyclophilin-type PPIase family. PPIase D subfamily.

It localises to the cytoplasm. It catalyses the reaction [protein]-peptidylproline (omega=180) = [protein]-peptidylproline (omega=0). Its function is as follows. PPIases accelerate the folding of proteins. It catalyzes the cis-trans isomerization of proline imidic peptide bonds in oligopeptides. The protein is Peptidyl-prolyl cis-trans isomerase D (CPR6) of Cryptococcus neoformans var. neoformans serotype D (strain B-3501A) (Filobasidiella neoformans).